The sequence spans 260 residues: Indole-3-glycerol phosphate synthase (260 aa).

This sequence belongs to the TrpC family.

The catalysed reaction is 1-(2-carboxyphenylamino)-1-deoxy-D-ribulose 5-phosphate + H(+) = (1S,2R)-1-C-(indol-3-yl)glycerol 3-phosphate + CO2 + H2O. The protein operates within amino-acid biosynthesis; L-tryptophan biosynthesis; L-tryptophan from chorismate: step 4/5. The protein is Indole-3-glycerol phosphate synthase of Staphylococcus saprophyticus subsp. saprophyticus (strain ATCC 15305 / DSM 20229 / NCIMB 8711 / NCTC 7292 / S-41).